Reading from the N-terminus, the 288-residue chain is dTDP-4-keto-6-deoxy-D-glucose reductase (288 aa).

NADH contacts are provided by residues 12-14 (GML), 38-39 (DI), 62-64 (AWT), Tyr-127, and Lys-131. NADPH contacts are provided by residues 13 to 14 (ML), 38 to 39 (DI), 62 to 64 (AWT), Tyr-127, and Lys-131. Tyr-127 serves as the catalytic Proton donor/acceptor.

The protein belongs to the dTDP-4-dehydrorhamnose reductase family. The cofactor is Mg(2+).

Its pathway is antibiotic biosynthesis; novobiocin biosynthesis. Its function is as follows. Reduces the product formed from the reaction of NovW with dTDP-4-keto-6-deoxy-D-glucose to result in dTDP-5-methyl-L-rhamnose in the novobiocin biosynthesis pathway, an aminocoumarin family antibiotic that targets bacterial DNA gyrases. The chain is dTDP-4-keto-6-deoxy-D-glucose reductase (novS) from Streptomyces niveus (Streptomyces spheroides).